Here is a 130-residue protein sequence, read N- to C-terminus: Holo-[acyl-carrier-protein] synthase (130 aa).

2 residues coordinate Mg(2+): Asp9 and Glu58.

The protein belongs to the P-Pant transferase superfamily. AcpS family. Requires Mg(2+) as cofactor.

It localises to the cytoplasm. It carries out the reaction apo-[ACP] + CoA = holo-[ACP] + adenosine 3',5'-bisphosphate + H(+). Transfers the 4'-phosphopantetheine moiety from coenzyme A to a Ser of acyl-carrier-protein. This chain is Holo-[acyl-carrier-protein] synthase, found in Mycobacterium leprae (strain Br4923).